The sequence spans 231 residues: Homeobox protein engrailed-1a (231 aa).

Disordered stretches follow at residues 1–29, 43–105, and 121–148; these read MEDQRRGQGEEEDDSGSLPSPPLLPAHRN, GCKR…KDSQ, and DRPSSGPRTRKLKKKNNNTESDDKRPRT. Over residues 43–56 the composition is skewed to basic and acidic residues; the sequence is GCKRERERVTRDSG. The segment covering 68–102 has biased composition (low complexity); it reads DGVSSSASSTVSSPVSSRQSNKVEQGSSKSSSPSK. The segment at residues 143-202 is a DNA-binding region (homeobox); that stretch reads DKRPRTAFTAEQLQRLKAEFQTSRYITEQRRQALARELGLNESQIKIWFQNKRAKIKKSS.

Belongs to the engrailed homeobox family.

The protein resides in the nucleus. The protein is Homeobox protein engrailed-1a (eng1a) of Danio rerio (Zebrafish).